A 1350-amino-acid chain; its full sequence is Zinc finger protein Xfin (1350 aa).

In terms of domain architecture, KRAB spans 1 to 58 (MEEPKCLQREMYKSVMTENYQCVLSLGYPIRKPEIVSMMEVGEELWSKNDSARPGQKE). The disordered stretch occupies residues 47–68 (SKNDSARPGQKEVEGETPKESD). 37 C2H2-type zinc fingers span residues 108–130 (HICSHYGKLFSCYAAVVRHQRMH), 136–158 (HHCPHCKKSFVQRSDFIKHQRTH), 164–186 (YQCVECQKKFTERSALVNHQRTH), 192–214 (YTCLDCQKTFNQRSALTKHRRTH), 220–242 (YRCSVCSKSFIQNSDLVKHLRTH), 248–270 (YECPLCVKRFAESSALMKHKRTH), 276–298 (FRCSECSRSFTHNSDLTAHMRKH), 326–348 (YSCSKCRKTFKRWKSFLNHQQTH), 354–376 (YLCSHCNKGFIQNSDLVKHFRTH), 382–404 (YQCAECHKGFIQKSDLVKHLRTH), 410–432 (FKCSHCDKKFTERSALAKHQRTH), 438–460 (YKCSDCGKEFTQRSNLILHQRIH), 466–488 (YKCTLCDRTFIQNSDLVKHQKVH), 503–525 (HKCSKCDLTFSHWSTFMKHSKLH), 531–553 (FQCAECKKGFTQKSDLVKHIRVH), 559–581 (FKCLLCKKSFSQNSDLHKHWRIH), 587–609 (FPCYTCDKSFTERSALIKHHRTH), 615–637 (HKCSVCQKGFIQKSALTKHSRTH), 643–665 (YPCTQCGKSFIQNSDLVKHQRIH), 671–693 (YHCTECNKRFTEGSSLVKHRRTH), 699–721 (YRCPQCEKTFIQSSDLVKHLVVH), 750–772 (YPCTECGKVFHQRPALLKHLRTH), 778–800 (YPCNECDKSFFQTSDLVKHLRTH), 806–828 (YHCPECNKGFIQNSDLVKHQRTH), 834–856 (YTCSQCDKGFIQRSALTKHMRTH), 862–884 (YKCEQCQKCFIQNSDLVKHQRIH), 890–912 (YHCPDCDKRFTEGSSLIKHQRIH), 918–940 (YPCGVCGKSFSQSSNLLKHLKCH), 988–1010 (FKCNDCGKCFAHRSVLIKHVRIH), 1016–1038 (YKCSQCTRSFIQKSDLVKHYRTH), 1044–1066 (YKCGLCERSFVEKSALSRHQRVH), 1136–1158 (YSCSECGKCFTHRSVFLKHWRMH), 1164–1186 (YTCKECGKSFSQSSALVKHVRIH), 1192–1214 (YPCSTCGKSFIQKSDLAKHQRIH), 1220–1242 (YTCTVCGKKFIDRSSVVKHSRTH), 1248–1270 (YKCNECTKGFVQKSDLVKHMRTH), and 1276–1298 (YGCNCCDRSFSTHSASVRHQRMC).

Belongs to the krueppel C2H2-type zinc-finger protein family. In terms of processing, phosphorylated. Phosphorylation enhances RNA binding. In terms of tissue distribution, expressed in oocytes, and in specialized cell types such as neural retina cones in adults.

Its subcellular location is the cytoplasm. Its function is as follows. Binds to poly-G sequences in RNA. May function in post-translational regulation processes. The polypeptide is Zinc finger protein Xfin (Xenopus laevis (African clawed frog)).